Here is a 302-residue protein sequence, read N- to C-terminus: Polyadenylate-binding protein 2 (302 aa).

The segment covering 1 to 12 has biased composition (low complexity); sequence MAAAAAAAAAAG. Residues 1–111 are disordered; that stretch reads MAAAAAAAAA…EADPGDGAIE (111 aa). Ala2 is subject to N-acetylalanine. The tract at residues 2 to 141 is interaction with SKIP; it reads AAAAAAAAAA…LKELQNEVEK (140 aa). An Omega-N-methylarginine modification is found at Arg17. Residue Ser19 is modified to Phosphoserine. A compositionally biased stretch (gly residues) spans 30-47; the sequence is GAGGEAGEGDPGGAGDYG. Positions 51–68 are enriched in acidic residues; the sequence is ESEELEPGELLPEPEPEE. Ser52 carries the post-translational modification Phosphoserine. Residues 73-83 are compositionally biased toward pro residues; that stretch reads PRAPPGAPGPG. Ser91 bears the Phosphoserine mark. Residues 111–147 adopt a coiled-coil conformation; that stretch reads EDPELEAIKARVREMEEEAEKLKELQNEVEKQMNMSP. Residues 115–143 form a stimulates PAPOLA region; the sequence is LEAIKARVREMEEEAEKLKELQNEVEKQM. 2 positions are modified to phosphoserine: Ser146 and Ser231. An RRM domain is found at 168–245; the sequence is RSIYVGNVDY…RQIKVIPKRT (78 aa). 3 positions are modified to asymmetric dimethylarginine; alternate: Arg234, Arg255, and Arg259. 3 positions are modified to omega-N-methylarginine; alternate: Arg234, Arg255, and Arg259. The strong poly(A) affinity and self-association stretch occupies residues 255 to 302; the sequence is RGFPRSRYRARTTNYNSSRSRFYSGFNSRPRGRIYRGRARATSWYSPY. Arg261, Arg263, Arg265, Arg273, Arg275, Arg283, Arg285, Arg287, Arg290, Arg292, and Arg294 each carry asymmetric dimethylarginine. The segment at 282–302 is interaction with PAPOLA; sequence SRPRGRIYRGRARATSWYSPY.

Monomer and homooligomer. Identified in a IGF2BP1-dependent mRNP granule complex containing untranslated mRNAs. Binds RNA as a monomer and oligomerizes when bound to poly(A). Interacts with PAPOLA, but only in presence of oligo(A) RNA. Interacts with NUDT21/CPSF5 and transportin. Associates in a ternary complex with CPSF4 and NS/NS1 and interaction with NS/NS1, blocks nuclear export of host cell mRNAs. Associates in a single complex with SKIP and MYOD1 and interacts with SKIP in differentiated myocytes. May interact with SETX. Interacts (via RRM domain and C-terminal arginine-rich region) with ZFP36 (via hypophosphorylated form); this interaction occurs in the nucleus in a RNA-independent manner, decreases in presence of single-stranded poly(A) RNA-oligomer and in a p38-dependent-manner and may down-regulated RNA poly(A) polymerase activity. Component of the poly(A) tail exosome targeting (PAXT) complex composed of PABPN1, ZFC3H1 and MTREX. Interacts with ZFC3H1 in a RNase-insensitive manner. Interacts with FRG1. Interacts with ZC3H11A. Arginine dimethylation is asymmetric and involves PRMT1 and PRMT3. It does not influence the RNA binding properties. In terms of tissue distribution, ubiquitous.

The protein resides in the cytoplasm. Its subcellular location is the nucleus. It localises to the nucleus speckle. In terms of biological role, involved in the 3'-end formation of mRNA precursors (pre-mRNA) by the addition of a poly(A) tail of 200-250 nt to the upstream cleavage product. Stimulates poly(A) polymerase (PAPOLA) conferring processivity on the poly(A) tail elongation reaction and also controls the poly(A) tail length. Increases the affinity of poly(A) polymerase for RNA. Is also present at various stages of mRNA metabolism including nucleocytoplasmic trafficking and nonsense-mediated decay (NMD) of mRNA. Cooperates with SKIP to synergistically activate E-box-mediated transcription through MYOD1 and may regulate the expression of muscle-specific genes. Binds to poly(A) and to poly(G) with high affinity. May protect the poly(A) tail from degradation. Subunit of the trimeric poly(A) tail exosome targeting (PAXT) complex, a complex that directs a subset of long and polyadenylated poly(A) RNAs for exosomal degradation. The RNA exosome is fundamental for the degradation of RNA in eukaryotic nuclei. Substrate targeting is facilitated by its cofactor MTREX, which links to RNA-binding protein adapters. This chain is Polyadenylate-binding protein 2 (Pabpn1), found in Mus musculus (Mouse).